We begin with the raw amino-acid sequence, 302 residues long: ICOS ligand (302 aa).

The signal sequence occupies residues 1 to 18; that stretch reads MRLGSPGLLFLLFSSLRA. Residues 19-129 enclose the Ig-like V-type domain; the sequence is DTQEKEVRAM…LGFQEVLSVE (111 aa). At 19–256 the chain is on the extracellular side; sequence DTQEKEVRAM…VSTGEKNAAT (238 aa). C37 and C113 are oxidised to a cystine. N-linked (GlcNAc...) asparagine glycosylation is found at N70, N137, N173, N186, and N225. One can recognise an Ig-like C2-type domain in the interval 141-227; it reads PVVSAPHSPS…ENVLLQQNLT (87 aa). C158 and C216 are joined by a disulfide. The helical transmembrane segment at 257-277 threads the bilayer; the sequence is WSILAVLCLLVVVAVAIGWVC. Residues 278–302 are Cytoplasmic-facing; sequence RDRCLQHSYAGAWAVSPETELTGHV.

Belongs to the immunoglobulin superfamily. BTN/MOG family. In terms of assembly, interacts with CTLA4 (in vitro). As to expression, expressed on peripheral blood B-cells and monocytes, as well as on monocyte-derived dendritic cells (at protein level). In terms of tissue distribution, widely expressed (brain, heart, kidney, liver, lung, pancreas, placenta, skeletal muscle, bone marrow, colon, ovary, prostate, testis, lymph nodes, leukocytes, spleen, thymus and tonsil). Detected only in lymph nodes, leukocytes and spleen. Expressed on activated monocytes and dendritic cells.

Its subcellular location is the cell membrane. In terms of biological role, ligand for the T-cell-specific cell surface receptor ICOS. Acts as a costimulatory signal for T-cell proliferation and cytokine secretion. Also induces B-cell proliferation and differentiation into plasma cells. Could play an important role in mediating local tissue responses to inflammatory conditions, as well as in modulating the secondary immune response by co-stimulating memory T-cell function. In endothelial cells, required for proper neutrophil transmigration in response to chemoattractants, such as CXCL8/IL8 or N-formyl-methionyl peptides (fMLP). In Homo sapiens (Human), this protein is ICOS ligand (ICOSLG).